Consider the following 227-residue polypeptide: MSIIGRFKDIMSANINALLDKAENPEKMVDQYLRNMNSDLAKVKAETAAVMAEEQRAKREYHECQADMEKMESYAMKALQAGNESDARKFLERKTSLESKLSELQAANQIAATNAAQMRKMHDKLVSDIGELEARKNMIKAKWAVAKTQERMNKLGASVSSTSQSMSAFGRMEDKVNKALDQANAMAELNSAPQDDMADLSAKYDTGGSSQVDDELAALKAKMMLDK.

Residues 33–125 adopt a coiled-coil conformation; sequence LRNMNSDLAK…AQMRKMHDKL (93 aa). Positions 191 to 211 are disordered; it reads SAPQDDMADLSAKYDTGGSSQ.

Belongs to the PspA/Vipp/IM30 family.

This Bacillus subtilis (strain 168) protein is Phage shock protein A homolog (ydjF).